The following is a 195-amino-acid chain: Imidazoleglycerol-phosphate dehydratase (195 aa).

Belongs to the imidazoleglycerol-phosphate dehydratase family.

It localises to the cytoplasm. The catalysed reaction is D-erythro-1-(imidazol-4-yl)glycerol 3-phosphate = 3-(imidazol-4-yl)-2-oxopropyl phosphate + H2O. It functions in the pathway amino-acid biosynthesis; L-histidine biosynthesis; L-histidine from 5-phospho-alpha-D-ribose 1-diphosphate: step 6/9. This is Imidazoleglycerol-phosphate dehydratase from Endomicrobium trichonymphae.